We begin with the raw amino-acid sequence, 155 residues long: Ribosomal RNA large subunit methyltransferase H (155 aa).

Gly103 is a binding site for S-adenosyl-L-methionine.

This sequence belongs to the RNA methyltransferase RlmH family. As to quaternary structure, homodimer.

The protein resides in the cytoplasm. It catalyses the reaction pseudouridine(1915) in 23S rRNA + S-adenosyl-L-methionine = N(3)-methylpseudouridine(1915) in 23S rRNA + S-adenosyl-L-homocysteine + H(+). Functionally, specifically methylates the pseudouridine at position 1915 (m3Psi1915) in 23S rRNA. This is Ribosomal RNA large subunit methyltransferase H from Caulobacter vibrioides (strain ATCC 19089 / CIP 103742 / CB 15) (Caulobacter crescentus).